A 338-amino-acid chain; its full sequence is Glycerol-3-phosphate dehydrogenase [NAD(P)+] (338 aa).

NADPH contacts are provided by Ser-13, Trp-14, and Lys-108. Lys-108, Gly-139, and Ser-141 together coordinate sn-glycerol 3-phosphate. Ala-143 contributes to the NADPH binding site. Lys-194, Asp-247, Ser-257, Arg-258, and Asn-259 together coordinate sn-glycerol 3-phosphate. Lys-194 serves as the catalytic Proton acceptor. Position 258 (Arg-258) interacts with NADPH. NADPH contacts are provided by Val-282 and Glu-284.

Belongs to the NAD-dependent glycerol-3-phosphate dehydrogenase family.

It is found in the cytoplasm. It carries out the reaction sn-glycerol 3-phosphate + NAD(+) = dihydroxyacetone phosphate + NADH + H(+). It catalyses the reaction sn-glycerol 3-phosphate + NADP(+) = dihydroxyacetone phosphate + NADPH + H(+). The protein operates within membrane lipid metabolism; glycerophospholipid metabolism. Functionally, catalyzes the reduction of the glycolytic intermediate dihydroxyacetone phosphate (DHAP) to sn-glycerol 3-phosphate (G3P), the key precursor for phospholipid synthesis. The protein is Glycerol-3-phosphate dehydrogenase [NAD(P)+] of Listeria monocytogenes serotype 4b (strain CLIP80459).